Reading from the N-terminus, the 329-residue chain is Beta-ketoacyl-[acyl-carrier-protein] synthase III (329 aa).

Residues Cys-123 and His-256 contribute to the active site. The ACP-binding stretch occupies residues 257–261 (QANIR). Residue Asn-286 is part of the active site.

The protein belongs to the thiolase-like superfamily. FabH family. In terms of assembly, homodimer.

It is found in the cytoplasm. It carries out the reaction malonyl-[ACP] + acetyl-CoA + H(+) = 3-oxobutanoyl-[ACP] + CO2 + CoA. It functions in the pathway lipid metabolism; fatty acid biosynthesis. Functionally, catalyzes the condensation reaction of fatty acid synthesis by the addition to an acyl acceptor of two carbons from malonyl-ACP. Catalyzes the first condensation reaction which initiates fatty acid synthesis and may therefore play a role in governing the total rate of fatty acid production. Possesses both acetoacetyl-ACP synthase and acetyl transacylase activities. Its substrate specificity determines the biosynthesis of branched-chain and/or straight-chain of fatty acids. This Burkholderia cenocepacia (strain HI2424) protein is Beta-ketoacyl-[acyl-carrier-protein] synthase III.